We begin with the raw amino-acid sequence, 302 residues long: Oxygen-dependent coproporphyrinogen-III oxidase (302 aa).

Serine 94 is a binding site for substrate. Histidine 98 and histidine 108 together coordinate a divalent metal cation. The Proton donor role is filled by histidine 108. Position 110–112 (110–112) interacts with substrate; the sequence is NVR. A divalent metal cation is bound by residues histidine 147 and histidine 177. The tract at residues 242–277 is important for dimerization; the sequence is YVEFNLVYDRGTLFGLQTGGRTESILMSMPPLVRWQ. 260 to 262 is a binding site for substrate; it reads GGR.

The protein belongs to the aerobic coproporphyrinogen-III oxidase family. As to quaternary structure, homodimer. The cofactor is a divalent metal cation.

The protein resides in the cytoplasm. It catalyses the reaction coproporphyrinogen III + O2 + 2 H(+) = protoporphyrinogen IX + 2 CO2 + 2 H2O. It participates in porphyrin-containing compound metabolism; protoporphyrin-IX biosynthesis; protoporphyrinogen-IX from coproporphyrinogen-III (O2 route): step 1/1. Functionally, involved in the heme biosynthesis. Catalyzes the aerobic oxidative decarboxylation of propionate groups of rings A and B of coproporphyrinogen-III to yield the vinyl groups in protoporphyrinogen-IX. This is Oxygen-dependent coproporphyrinogen-III oxidase from Shewanella putrefaciens (strain CN-32 / ATCC BAA-453).